Consider the following 279-residue polypeptide: 4-hydroxy-3-methylbut-2-enyl diphosphate reductase (279 aa).

A [4Fe-4S] cluster-binding site is contributed by C12. 2 residues coordinate (2E)-4-hydroxy-3-methylbut-2-enyl diphosphate: H40 and H72. 2 residues coordinate dimethylallyl diphosphate: H40 and H72. The isopentenyl diphosphate site is built by H40 and H72. [4Fe-4S] cluster is bound at residue C94. H122 provides a ligand contact to (2E)-4-hydroxy-3-methylbut-2-enyl diphosphate. H122 provides a ligand contact to dimethylallyl diphosphate. Residue H122 coordinates isopentenyl diphosphate. The active-site Proton donor is E124. T161 contributes to the (2E)-4-hydroxy-3-methylbut-2-enyl diphosphate binding site. C189 lines the [4Fe-4S] cluster pocket. (2E)-4-hydroxy-3-methylbut-2-enyl diphosphate-binding residues include S217, N219, and S261. Dimethylallyl diphosphate is bound by residues S217, N219, and S261. Isopentenyl diphosphate is bound by residues S217, N219, and S261.

It belongs to the IspH family. [4Fe-4S] cluster is required as a cofactor.

The enzyme catalyses isopentenyl diphosphate + 2 oxidized [2Fe-2S]-[ferredoxin] + H2O = (2E)-4-hydroxy-3-methylbut-2-enyl diphosphate + 2 reduced [2Fe-2S]-[ferredoxin] + 2 H(+). It carries out the reaction dimethylallyl diphosphate + 2 oxidized [2Fe-2S]-[ferredoxin] + H2O = (2E)-4-hydroxy-3-methylbut-2-enyl diphosphate + 2 reduced [2Fe-2S]-[ferredoxin] + 2 H(+). The protein operates within isoprenoid biosynthesis; dimethylallyl diphosphate biosynthesis; dimethylallyl diphosphate from (2E)-4-hydroxy-3-methylbutenyl diphosphate: step 1/1. It functions in the pathway isoprenoid biosynthesis; isopentenyl diphosphate biosynthesis via DXP pathway; isopentenyl diphosphate from 1-deoxy-D-xylulose 5-phosphate: step 6/6. Catalyzes the conversion of 1-hydroxy-2-methyl-2-(E)-butenyl 4-diphosphate (HMBPP) into a mixture of isopentenyl diphosphate (IPP) and dimethylallyl diphosphate (DMAPP). Acts in the terminal step of the DOXP/MEP pathway for isoprenoid precursor biosynthesis. The chain is 4-hydroxy-3-methylbut-2-enyl diphosphate reductase from Syntrophotalea carbinolica (strain DSM 2380 / NBRC 103641 / GraBd1) (Pelobacter carbinolicus).